A 648-amino-acid chain; its full sequence is Probable potassium transport system protein Kup 1 (648 aa).

Helical transmembrane passes span 25–45 (LTLG…IYAF), 57–77 (IVAG…ILVV), 113–133 (LVMA…VITP), 153–173 (SVSR…LFLM), 184–204 (LFGP…LIHI), 219–239 (GVLF…AVFL), 263–283 (WLAI…AFAL), 312–332 (IPLV…VITG), 362–382 (IYLP…VLGF), 391–411 (AYGV…FLVV), 417–437 (WGWP…LFFF), and 446–466 (EGGW…VTWV).

Belongs to the HAK/KUP transporter (TC 2.A.72) family.

It is found in the cell inner membrane. It carries out the reaction K(+)(in) + H(+)(in) = K(+)(out) + H(+)(out). Its function is as follows. Transport of potassium into the cell. Likely operates as a K(+):H(+) symporter. This chain is Probable potassium transport system protein Kup 1, found in Rhizorhabdus wittichii (strain DSM 6014 / CCUG 31198 / JCM 15750 / NBRC 105917 / EY 4224 / RW1) (Sphingomonas wittichii).